Here is a 134-residue protein sequence, read N- to C-terminus: Perlwapin (134 aa).

WAP domains are found at residues 2–45 (GPNL…CVPK), 46–89 (PKPG…YRPE), and 90–132 (KPGS…EKPC). 12 disulfide bridges follow: C8/C34, C17/C38, C21/C33, C27/C42, C51/C77, C59/C82, C64/C76, C70/C85, C94/C121, C104/C124, C108/C120, and C114/C128.

As to expression, nacreous layer of shell.

Its function is as follows. Inhibits growth of calcium carbonate crystals. May inhibit growth of certain crystallographic planes in the mineral phase of nacre in the shell. This Haliotis laevigata (Smooth Australian abalone) protein is Perlwapin.